We begin with the raw amino-acid sequence, 143 residues long: SsrA-binding protein (143 aa).

Belongs to the SmpB family.

The protein localises to the cytoplasm. In terms of biological role, required for rescue of stalled ribosomes mediated by trans-translation. Binds to transfer-messenger RNA (tmRNA), required for stable association of tmRNA with ribosomes. tmRNA and SmpB together mimic tRNA shape, replacing the anticodon stem-loop with SmpB. tmRNA is encoded by the ssrA gene; the 2 termini fold to resemble tRNA(Ala) and it encodes a 'tag peptide', a short internal open reading frame. During trans-translation Ala-aminoacylated tmRNA acts like a tRNA, entering the A-site of stalled ribosomes, displacing the stalled mRNA. The ribosome then switches to translate the ORF on the tmRNA; the nascent peptide is terminated with the 'tag peptide' encoded by the tmRNA and targeted for degradation. The ribosome is freed to recommence translation, which seems to be the essential function of trans-translation. The protein is SsrA-binding protein of Deinococcus radiodurans (strain ATCC 13939 / DSM 20539 / JCM 16871 / CCUG 27074 / LMG 4051 / NBRC 15346 / NCIMB 9279 / VKM B-1422 / R1).